Here is a 204-residue protein sequence, read N- to C-terminus: V-set and transmembrane domain-containing protein 2-like protein (204 aa).

A signal peptide spans 1–24 (MGAPLAVALGALHYLALFLQLGGA). In terms of domain architecture, Ig-like spans 41–158 (ALFTETPHDM…DGKARHHKVK (118 aa)). A disulfide bond links Cys-62 and Cys-142. A disordered region spans residues 168–204 (NSVLHLPEAPPAAPAPPPPKPGKELRKRSVDQEACSL). The segment covering 175-187 (EAPPAAPAPPPPK) has biased composition (pro residues). The segment covering 188 to 198 (PGKELRKRSVD) has biased composition (basic and acidic residues).

The sequence is that of V-set and transmembrane domain-containing protein 2-like protein (VSTM2L) from Homo sapiens (Human).